Here is a 120-residue protein sequence, read N- to C-terminus: Large ribosomal subunit protein uL18 (120 aa).

Belongs to the universal ribosomal protein uL18 family. Part of the 50S ribosomal subunit; part of the 5S rRNA/L5/L18/L25 subcomplex. Contacts the 5S and 23S rRNAs.

In terms of biological role, this is one of the proteins that bind and probably mediate the attachment of the 5S RNA into the large ribosomal subunit, where it forms part of the central protuberance. The polypeptide is Large ribosomal subunit protein uL18 (Rhizobium meliloti (strain 1021) (Ensifer meliloti)).